A 970-amino-acid polypeptide reads, in one-letter code: Sodium/calcium exchanger 1 (970 aa).

Residues 1–32 (MLQFSLSPTLSMGFHVIAMVALLFSHVDHISA) form the signal peptide. Over 33-71 (ETEMEGEGNETGECTGSYYCKKGVILPIWEPQDPSFGDK) the chain is Extracellular. An N-linked (GlcNAc...) asparagine glycan is attached at N41. Residues 72–92 (IARATVYFVAMVYMFLGVSII) traverse the membrane as a helical segment. Over 93–133 (ADRFMSSIEVITSQEKEITIKKPNGETTKTTVRIWNETVSN) the chain is Cytoplasmic. The chain crosses the membrane as a helical span at residues 134 to 154 (LTLMALGSSAPEILLSVIEVC). Residues 138 to 178 (ALGSSAPEILLSVIEVCGHNFTAGDLGPSTIVGSAAFNMFI) form an Alpha-1 repeat. The Extracellular portion of the chain corresponds to 155 to 167 (GHNFTAGDLGPST). The N-linked (GlcNAc...) asparagine glycan is linked to N157. A helical transmembrane segment spans residues 168–188 (IVGSAAFNMFIIIALCVYVVP). The Cytoplasmic portion of the chain corresponds to 189–201 (DGETRKIKHLRVF). The helical transmembrane segment at 202 to 222 (FVTAAWSIFAYTWLYIILSVS) threads the bilayer. Topologically, residues 223-228 (SPGVVE) are extracellular. Residues 229-249 (VWEGLLTFFFFPICVVFAWVA) form a helical membrane-spanning segment. The Cytoplasmic segment spans residues 250-797 (DRRLLFYKYV…FVPPTEYWNG (548 aa)). A putative calmodulin-binding region region spans residues 251 to 270 (RRLLFYKYVYKRYRAGKQRG). A phosphoserine mark is found at S282 and S389. Calx-beta domains are found at residues 393–493 (VNTE…VHLS) and 524–624 (ATVT…LEIG). Ca(2+) is bound by residues E417, D453, D478, D479, I481, E483, E486, D530, D531, D532, E548, D584, D610, E611, E612, and E715. The helical transmembrane segment at 798-818 (WACFIVSILMIGLLTAFIGDL) threads the bilayer. At 819–821 (ASH) the chain is on the extracellular side. Residues 822–842 (FACTIALKDSVTAVVFVALGT) form a helical membrane-spanning segment. The Alpha-2 repeat unit spans residues 839 to 875 (ALGTSVPDTFASKVAATQDQYADASIGNVTGSNAVNV). Over 843–871 (SVPDTFASKVAATQDQYADASIGNVTGSN) the chain is Cytoplasmic. A helical membrane pass occupies residues 872-892 (AVNVFLGIGVAWSIAAIYHAA). The Extracellular segment spans residues 893 to 903 (NGEQFKVSPGT). A helical transmembrane segment spans residues 904–924 (LAFSVTLFTIFAFINVGVLLY). The Cytoplasmic segment spans residues 925–941 (RRRPEIGGELGGPRTAK). The chain crosses the membrane as a helical span at residues 942-962 (LLTSCLFVLLWLLYIFFSSLE). Topologically, residues 963–970 (AYCHIKGF) are extracellular.

It belongs to the Ca(2+):cation antiporter (CaCA) (TC 2.A.19) family. SLC8 subfamily.

It localises to the cell membrane. It catalyses the reaction Ca(2+)(in) + 3 Na(+)(out) = Ca(2+)(out) + 3 Na(+)(in). Its activity is regulated as follows. Activated by micromolar levels of Ca(2+). Functionally, mediates the exchange of one Ca(2+) ion against three to four Na(+) ions across the cell membrane, and thereby contributes to the regulation of cytoplasmic Ca(2+) levels and Ca(2+)-dependent cellular processes. Contributes to Ca(2+) transport during excitation-contraction coupling in muscle. In a first phase, voltage-gated channels mediate the rapid increase of cytoplasmic Ca(2+) levels due to release of Ca(2+) stores from the endoplasmic reticulum. SLC8A1 mediates the export of Ca(2+) from the cell during the next phase, so that cytoplasmic Ca(2+) levels rapidly return to baseline. Required for normal embryonic heart development and the onset of heart contractions. This Bos taurus (Bovine) protein is Sodium/calcium exchanger 1 (SLC8A1).